A 48-amino-acid polypeptide reads, in one-letter code: Bacteriocin plantaricin-A (48 aa).

Positions 1 to 25 (MKIQIKGMKQLSNKEMQKIVGGKSS) are excised as a propeptide.

As to quaternary structure, active plantaricin A is composed of an alpha chain and a beta chain.

This heat stable bacteriocin inhibits the growth of closely related Lactobacillus species. It may act as a pore-forming protein, creating a channel in the cell membrane through a 'barrel stave' mechanism. This chain is Bacteriocin plantaricin-A (plnA), found in Lactiplantibacillus plantarum (strain ATCC BAA-793 / NCIMB 8826 / WCFS1) (Lactobacillus plantarum).